A 180-amino-acid chain; its full sequence is Adenine phosphoribosyltransferase (180 aa).

The protein belongs to the purine/pyrimidine phosphoribosyltransferase family. Homodimer.

The protein localises to the cytoplasm. It catalyses the reaction AMP + diphosphate = 5-phospho-alpha-D-ribose 1-diphosphate + adenine. Its pathway is purine metabolism; AMP biosynthesis via salvage pathway; AMP from adenine: step 1/1. Functionally, catalyzes a salvage reaction resulting in the formation of AMP, that is energically less costly than de novo synthesis. The protein is Adenine phosphoribosyltransferase of Mannheimia succiniciproducens (strain KCTC 0769BP / MBEL55E).